Reading from the N-terminus, the 239-residue chain is Ribosomal RNA small subunit methyltransferase G (239 aa).

S-adenosyl-L-methionine contacts are provided by residues Gly-105, Leu-110, 156–157, and Arg-169; that span reads VE.

The protein belongs to the methyltransferase superfamily. RNA methyltransferase RsmG family.

The protein localises to the cytoplasm. The enzyme catalyses guanosine(527) in 16S rRNA + S-adenosyl-L-methionine = N(7)-methylguanosine(527) in 16S rRNA + S-adenosyl-L-homocysteine. Functionally, specifically methylates the N7 position of guanine in position 527 of 16S rRNA. The protein is Ribosomal RNA small subunit methyltransferase G of Verminephrobacter eiseniae (strain EF01-2).